We begin with the raw amino-acid sequence, 975 residues long: Glycine dehydrogenase (decarboxylating) (975 aa).

Lysine 723 is subject to N6-(pyridoxal phosphate)lysine.

Belongs to the GcvP family. As to quaternary structure, the glycine cleavage system is composed of four proteins: P, T, L and H. Pyridoxal 5'-phosphate serves as cofactor.

It catalyses the reaction N(6)-[(R)-lipoyl]-L-lysyl-[glycine-cleavage complex H protein] + glycine + H(+) = N(6)-[(R)-S(8)-aminomethyldihydrolipoyl]-L-lysyl-[glycine-cleavage complex H protein] + CO2. Its function is as follows. The glycine cleavage system catalyzes the degradation of glycine. The P protein binds the alpha-amino group of glycine through its pyridoxal phosphate cofactor; CO(2) is released and the remaining methylamine moiety is then transferred to the lipoamide cofactor of the H protein. This chain is Glycine dehydrogenase (decarboxylating), found in Burkholderia ambifaria (strain ATCC BAA-244 / DSM 16087 / CCUG 44356 / LMG 19182 / AMMD) (Burkholderia cepacia (strain AMMD)).